Reading from the N-terminus, the 276-residue chain is 4-deoxy-L-threo-5-hexosulose-uronate ketol-isomerase (276 aa).

Zn(2+) contacts are provided by histidine 194, histidine 196, glutamate 201, and histidine 243.

This sequence belongs to the KduI family. It depends on Zn(2+) as a cofactor.

The catalysed reaction is 5-dehydro-4-deoxy-D-glucuronate = 3-deoxy-D-glycero-2,5-hexodiulosonate. The protein operates within glycan metabolism; pectin degradation; 2-dehydro-3-deoxy-D-gluconate from pectin: step 4/5. Catalyzes the isomerization of 5-dehydro-4-deoxy-D-glucuronate to 3-deoxy-D-glycero-2,5-hexodiulosonate. In Lachnoclostridium phytofermentans (strain ATCC 700394 / DSM 18823 / ISDg) (Clostridium phytofermentans), this protein is 4-deoxy-L-threo-5-hexosulose-uronate ketol-isomerase.